A 232-amino-acid polypeptide reads, in one-letter code: Clarin-2 (232 aa).

Residues 10–30 (YGLASLLSFSSFILIIVALVV) form a helical membrane-spanning segment. N-linked (GlcNAc...) asparagine glycosylation is present at N48. Transmembrane regions (helical) follow at residues 101–121 (ILLLLFLALALALVSMGFAIL), 139–159 (LWNVLAGGVVALAIASFVAAV), and 188–208 (SFWICVASASAHAANLVVVAI).

The protein belongs to the clarin family.

The protein localises to the cell projection. The protein resides in the stereocilium membrane. In terms of biological role, plays a key role to hearing function. Required for normal organization and maintenance of the stereocilia bundle and for mechano-electrical transduction. The sequence is that of Clarin-2 from Homo sapiens (Human).